The sequence spans 187 residues: Ribosome-recycling factor (187 aa).

It belongs to the RRF family.

The protein resides in the cytoplasm. Its function is as follows. Responsible for the release of ribosomes from messenger RNA at the termination of protein biosynthesis. May increase the efficiency of translation by recycling ribosomes from one round of translation to another. This is Ribosome-recycling factor from Paracoccus zeaxanthinifaciens.